Here is a 512-residue protein sequence, read N- to C-terminus: MSLAWRTLQKAFYLETSLRILQMRPSLSCASRIYVPKLTLHTKHNMPPCDFSPEKYQSLAYNHVLEIHKQHLSPVNTAYFQKPLLLHQGHMEWLFDSEGNRYLDFFSGIVTVGVGHCHPKVTAVAKKQMDRLWHTSSVFFHSPMHEYAERLSALLPEPLKVIFLVNSGSEANDLAMVMARAYSNHTDIISFRGAYHGCSPYTLGLTNVGIYKMKVPSTIACQSTMCPDVFRGPWGGSHCRDSPVQTVRKCSCAPDGCQAKERYIEQFKDTLNTSVATSIAGFFAEPIQGVNGVVQYPKEFLKEAFALVRERGGVCIADEVQTGFGRLGSHFWGFQTHDTMPDIVTMAKGIGNGFPMAAVVTTPEIASSLAKHLHHFSTFGGSPLACAIGSAVLEVIEEENLQRNSQEVGTYMLLKFAKLRDEFDIVGDVRGKGLMVGIEMVQDKISRQPLPKTEVNQIHEDCKDMGLLVGRGGNFSQTFRIAPPMRVTKLEVDFAFEVFRSALTQHMERRAK.

The N-terminal 39 residues, 1 to 39 (MSLAWRTLQKAFYLETSLRILQMRPSLSCASRIYVPKLT), are a transit peptide targeting the mitochondrion. Lysine 55 bears the N6-acetyllysine mark. Lysine 69 is subject to N6-acetyllysine; alternate. Lysine 69 is subject to N6-succinyllysine; alternate. Position 82 is an N6-acetyllysine (lysine 82). N6-acetyllysine; alternate is present on lysine 260. At lysine 260 the chain carries N6-succinyllysine; alternate. Lysine 302 bears the N6-succinyllysine mark. Lysine 348 carries the N6-(pyridoxal phosphate)lysine modification. An N6-acetyllysine; alternate mark is found at lysine 415 and lysine 418. 2 positions are modified to N6-succinyllysine; alternate: lysine 415 and lysine 418. An N6-acetyllysine modification is found at lysine 452.

The protein belongs to the class-III pyridoxal-phosphate-dependent aminotransferase family. In terms of assembly, homotetramer. The cofactor is pyridoxal 5'-phosphate. As to expression, expressed in the liver, lung and kidney.

Its subcellular location is the mitochondrion. The catalysed reaction is glyoxylate + L-alanine = glycine + pyruvate. It catalyses the reaction (R)-3-amino-2-methylpropanoate + pyruvate = 2-methyl-3-oxopropanoate + L-alanine. It carries out the reaction 3-oxopropanoate + L-alanine = beta-alanine + pyruvate. The enzyme catalyses 2-oxobutanoate + L-alanine = (2S)-2-aminobutanoate + pyruvate. The catalysed reaction is N(omega),N(omega)-dimethyl-L-arginine + pyruvate = 5-(3,3-dimethylguanidino)-2-oxopentanoate + L-alanine. It catalyses the reaction N(omega),N('omega)-dimethyl-L-arginine + pyruvate = 5-(3,3'-dimethylguanidino)-2-oxopentanoate + L-alanine. It carries out the reaction N(omega),N(omega)-dimethyl-L-arginine + glyoxylate = 5-(3,3-dimethylguanidino)-2-oxopentanoate + glycine. The enzyme catalyses N(omega),N('omega)-dimethyl-L-arginine + glyoxylate = 5-(3,3'-dimethylguanidino)-2-oxopentanoate + glycine. The catalysed reaction is N(omega)-methyl-L-arginine + pyruvate = 5-(3-methylguanidino)-2-oxopentanoate + L-alanine. It catalyses the reaction N(omega)-methyl-L-arginine + glyoxylate = 5-(3-methylguanidino)-2-oxopentanoate + glycine. It carries out the reaction L-ornithine + pyruvate = 5-amino-2-oxopentanoate + L-alanine. The enzyme catalyses L-ornithine + glyoxylate = 5-amino-2-oxopentanoate + glycine. The catalysed reaction is (2S)-2-aminobutanoate + glyoxylate = 2-oxobutanoate + glycine. It catalyses the reaction N(omega),N(omega)-dimethyl-L-arginine + oxaloacetate = 5-(3,3-dimethylguanidino)-2-oxopentanoate + L-aspartate. It carries out the reaction oxaloacetate + L-alanine = L-aspartate + pyruvate. The enzyme catalyses N(omega),N(omega)-dimethyl-L-arginine + 2-oxobutanoate = 5-(3,3-dimethylguanidino)-2-oxopentanoate + (2S)-2-aminobutanoate. The catalysed reaction is 2-oxopentanoate + N(omega),N(omega)-dimethyl-L-arginine = 5-(3,3-dimethylguanidino)-2-oxopentanoate + L-2-aminopentanoate. It catalyses the reaction 2-oxohexanoate + N(omega),N(omega)-dimethyl-L-arginine = L-2-aminohexanoate + 5-(3,3-dimethylguanidino)-2-oxopentanoate. Inhibited by 5-fluorouracil and 6-fluorouracil. Inhibited by phenylhydrazine, hydroxylamine, l-amino-L-proline, para-chloromercuribenzoate and HgCl2. Its function is as follows. Multifunctional aminotransferase with a broad substrate specificity. Catalyzes the conversion of glyoxylate to glycine using alanine as the amino donor. Catalyzes metabolism of not L- but the D-isomer of D-beta-aminoisobutyric acid to generate 2-methyl-3-oxopropanoate and alanine. Catalyzes the transfer of the amino group from beta-alanine to pyruvate to yield L-alanine and 3-oxopropanoate. Can metabolize NG-monomethyl-L-arginine (NMMA), asymmetric NG,NG-dimethyl-L-arginine (ADMA) and symmetric NG,N'G-dimethyl-L-arginine (SDMA). ADMA is a potent inhibitor of nitric-oxide (NO) synthase, and this activity provides mechanism through which the kidney regulates blood pressure. The protein is Alanine--glyoxylate aminotransferase 2, mitochondrial (Agxt2) of Rattus norvegicus (Rat).